The primary structure comprises 326 residues: DNA repair protein XRCC4 (326 aa).

Residues 1–212 (MERKVSRIYL…QLEESTKPER (212 aa)) are interaction with IFFO1. At Ser53 the chain carries Phosphoserine; by PRKDC. Coiled-coil stretches lie at residues 131-165 (LDTI…FEKC) and 185-209 (NEKK…ESTK). The interaction with LIG4 stretch occupies residues 180 to 211 (FILVLNEKKTKIRSLHKLLNEVQQLEESTKPE). Ser193 is modified (phosphoserine; by PRKDC). The tract at residues 203–326 (QLEESTKPER…RNSSPEDLFD (124 aa)) is disordered. Positions 206–226 (ESTKPERENPCSDKTPEEHGL) are enriched in basic and acidic residues. Tyr227 carries the phosphotyrosine modification. Residue Ser230 is modified to Phosphoserine. Thr231 carries the phosphothreonine modification. Ser235 is modified (phosphoserine). At Thr244 the chain carries Phosphothreonine. Residue Ser250 is modified to Phosphoserine. Position 254 is a phosphoserine; by PRKDC (Ser254). A Nuclear localization signal motif is present at residues 264–269 (RKRRHR). Residue Lys290 forms a Glycyl lysine isopeptide (Lys-Gly) (interchain with G-Cter in ubiquitin) linkage. Phosphoserine; by PRKDC is present on Ser295. Ser296 carries the post-translational modification Phosphoserine. Phosphoserine; by PRKDC occurs at positions 307 and 312. A compositionally biased stretch (polar residues) spans 307-326 (SAENMSLETLRNSSPEDLFD). A Phosphothreonine; by PRKDC modification is found at Thr315. Residues Ser319 and Ser320 each carry the phosphoserine; by PRKDC modification.

Belongs to the XRCC4-XLF family. XRCC4 subfamily. In terms of assembly, homodimer and homotetramer in solution. Interacts with NHEJ1/XLF; the interaction is direct and is mediated via a head-to-head interaction between N-terminal head regions. Interacts with LIG4; the LIG4-XRCC4 subcomplex has a 1:2 stoichiometry and XRCC4 is required for LIG4 stability. Component of the core long-range non-homologous end joining (NHEJ) complex (also named DNA-PK complex) composed of PRKDC, LIG4, XRCC4, XRCC6/Ku70, XRCC5/Ku86 and NHEJ1/XLF. Additional component of the NHEJ complex includes PAXX. Following autophosphorylation, PRKDC dissociates from DNA, leading to formation of the short-range NHEJ complex, composed of LIG4, XRCC4, XRCC6/Ku70, XRCC5/Ku86 and NHEJ1/XLF. Interacts with PRKDC; the interaction is direct. Interacts with XRCC6/Ku70; the interaction is direct. Interacts with APTX and APLF. Forms a heterotetramer with IFFO1; the interaction involves LIG4-free XRCC4 and leads to the relocalization of IFFO1 to the sites of DNA damage. Interacts with PNKP; mainly interacts with PNKP when phosphorylated at Thr-231, but is also able to interact at much lower level with PNKP when not unphosphorylated. Interacts with POLL (DNA polymerase lambda). Interacts with XKR4; interacts with the processed form of XKR4, which is cleaved by caspase. In terms of processing, phosphorylated by PRKDC at the C-terminus in response to DNA damage; Ser-254 and Ser-312 constitute the main phosphorylation sites. Phosphorylation by PRKDC at the C-terminus of XRCC4 and NHEJ1/XLF are highly redundant and regulate ability of the XRCC4-NHEJ1/XLF subcomplex to bridge DNA. Phosphorylation by PRKDC does not prevent interaction with NHEJ1/XLF but disrupts ability to bridge DNA and promotes detachment from DNA. Phosphorylation at Ser-319 and Ser-320 by PRKDC promotes recognition by the SCF(FBXW7) complex and subsequent ubiquitination via 'Lys-63'-linked ubiquitin. Phosphorylation at Thr-231 by CK2 promotes interaction with PNKP; regulating PNKP activity and localization to DNA damage sites. Phosphorylation by CK2 promotes interaction with APTX. Ubiquitinated at Lys-290 by the SCF(FBXW7) complex via 'Lys-63'-linked ubiquitination, thereby promoting double-strand break repair: the SCF(FBXW7) complex specifically recognizes XRCC4 when phosphorylated at Ser-319 and Ser-320 by PRKDC, and 'Lys-63'-linked ubiquitination facilitates DNA non-homologous end joining (NHEJ) by enhancing association with XRCC5/Ku80 and XRCC6/Ku70. Monoubiquitinated. Post-translationally, undergoes proteolytic processing by caspase-3 (CASP3). This generates the protein XRCC4, C-terminus (XRCC4/C), which translocates to the cytoplasm and activates phospholipid scramblase activity of XKR4, thereby promoting phosphatidylserine exposure on apoptotic cell surface.

It is found in the nucleus. The protein resides in the chromosome. Its subcellular location is the cytoplasm. In terms of biological role, DNA non-homologous end joining (NHEJ) core factor, required for double-strand break repair and V(D)J recombination. Acts as a scaffold protein that regulates recruitment of other proteins to DNA double-strand breaks (DSBs). Associates with NHEJ1/XLF to form alternating helical filaments that bridge DNA and act like a bandage, holding together the broken DNA until it is repaired. The XRCC4-NHEJ1/XLF subcomplex binds to the DNA fragments of a DSB in a highly diffusive manner and robustly bridges two independent DNA molecules, holding the broken DNA fragments in close proximity to one other. The mobility of the bridges ensures that the ends remain accessible for further processing by other repair factors. Plays a key role in the NHEJ ligation step of the broken DNA during DSB repair via direct interaction with DNA ligase IV (LIG4): the LIG4-XRCC4 subcomplex reseals the DNA breaks after the gap filling is completed. XRCC4 stabilizes LIG4, regulates its subcellular localization and enhances LIG4's joining activity. Binding of the LIG4-XRCC4 subcomplex to DNA ends is dependent on the assembly of the DNA-dependent protein kinase complex DNA-PK to these DNA ends. Promotes displacement of PNKP from processed strand break termini. Its function is as follows. Acts as an activator of the phospholipid scramblase activity of XKR4. This form, which is generated upon caspase-3 (CASP3) cleavage, translocates into the cytoplasm and interacts with XKR4, thereby promoting phosphatidylserine scramblase activity of XKR4 and leading to phosphatidylserine exposure on apoptotic cell surface. This Mus musculus (Mouse) protein is DNA repair protein XRCC4.